The following is a 346-amino-acid chain: Leucine zipper protein 2 (346 aa).

A signal peptide spans methionine 1–serine 19. Positions leucine 16–glutamine 211 form a coiled coil. N-linked (GlcNAc...) asparagine glycosylation occurs at asparagine 133. The segment at leucine 164–leucine 192 is leucine-zipper. Disordered regions lie at residues glutamine 221–proline 240 and proline 248–leucine 346. Over residues alanine 250–serine 261 the composition is skewed to low complexity. Over residues glycine 262–aspartate 283 the composition is skewed to polar residues. Asparagine 264 carries an N-linked (GlcNAc...) asparagine glycan. Over residues aspartate 286–serine 298 the composition is skewed to basic and acidic residues. N-linked (GlcNAc...) asparagine glycosylation occurs at asparagine 302.

The protein localises to the secreted. In Homo sapiens (Human), this protein is Leucine zipper protein 2 (LUZP2).